Here is a 200-residue protein sequence, read N- to C-terminus: Large ribosomal subunit protein uL4 (200 aa).

Positions 38–75 (GRQGSKQQKNRSDVSGGGKRPWRQKGTGRARAGTSRGP) are disordered.

The protein belongs to the universal ribosomal protein uL4 family. Part of the 50S ribosomal subunit.

Functionally, one of the primary rRNA binding proteins, this protein initially binds near the 5'-end of the 23S rRNA. It is important during the early stages of 50S assembly. It makes multiple contacts with different domains of the 23S rRNA in the assembled 50S subunit and ribosome. Forms part of the polypeptide exit tunnel. This Azotobacter vinelandii (strain DJ / ATCC BAA-1303) protein is Large ribosomal subunit protein uL4.